A 306-amino-acid chain; its full sequence is Pantothenate kinase (306 aa).

91-98 is an ATP binding site; that stretch reads GSVAVGKS.

It belongs to the prokaryotic pantothenate kinase family.

It localises to the cytoplasm. It catalyses the reaction (R)-pantothenate + ATP = (R)-4'-phosphopantothenate + ADP + H(+). Its pathway is cofactor biosynthesis; coenzyme A biosynthesis; CoA from (R)-pantothenate: step 1/5. In Streptococcus equi subsp. zooepidemicus (strain MGCS10565), this protein is Pantothenate kinase.